The primary structure comprises 147 residues: UPF0735 ACT domain-containing protein RBAM_024960 (147 aa).

The 76-residue stretch at 70-145 (TLFFHLEDRS…FIEKVEILGS (76 aa)) folds into the ACT domain.

The protein belongs to the UPF0735 family.

This is UPF0735 ACT domain-containing protein RBAM_024960 from Bacillus velezensis (strain DSM 23117 / BGSC 10A6 / LMG 26770 / FZB42) (Bacillus amyloliquefaciens subsp. plantarum).